Consider the following 111-residue polypeptide: uncharacterized protein (111 aa).

2 helical membrane-spanning segments follow: residues 7 to 27 (ILNIILALAVPIGLLFISMMI) and 53 to 73 (AFAMFIPLLIIALTLLVTFLH).

The protein resides in the cell membrane. This is an uncharacterized protein from Bacillus anthracis.